The chain runs to 111 residues: Large ribosomal subunit protein uL22 (111 aa).

The protein belongs to the universal ribosomal protein uL22 family. Part of the 50S ribosomal subunit.

Functionally, this protein binds specifically to 23S rRNA; its binding is stimulated by other ribosomal proteins, e.g. L4, L17, and L20. It is important during the early stages of 50S assembly. It makes multiple contacts with different domains of the 23S rRNA in the assembled 50S subunit and ribosome. The globular domain of the protein is located near the polypeptide exit tunnel on the outside of the subunit, while an extended beta-hairpin is found that lines the wall of the exit tunnel in the center of the 70S ribosome. The chain is Large ribosomal subunit protein uL22 from Chlamydia pneumoniae (Chlamydophila pneumoniae).